The sequence spans 424 residues: Tyrosine--tRNA ligase (424 aa).

An L-tyrosine-binding site is contributed by Y37. A 'HIGH' region motif is present at residues 42-51; sequence PTADSLHLGH. 2 residues coordinate L-tyrosine: Y174 and Q178. The 'KMSKS' region motif lies at 234–238; that stretch reads KFGKT. K237 is a binding site for ATP. The S4 RNA-binding domain maps to 357-414; the sequence is TGLIDALVASGLAKSKSEARTFIQSGSVAINGNKAEALDHAIGGDELLYGRFTILRRG.

This sequence belongs to the class-I aminoacyl-tRNA synthetase family. TyrS type 1 subfamily. As to quaternary structure, homodimer.

It localises to the cytoplasm. It carries out the reaction tRNA(Tyr) + L-tyrosine + ATP = L-tyrosyl-tRNA(Tyr) + AMP + diphosphate + H(+). Catalyzes the attachment of tyrosine to tRNA(Tyr) in a two-step reaction: tyrosine is first activated by ATP to form Tyr-AMP and then transferred to the acceptor end of tRNA(Tyr). The sequence is that of Tyrosine--tRNA ligase from Dechloromonas aromatica (strain RCB).